Consider the following 122-residue polypeptide: Large ribosomal subunit protein uL14 (122 aa).

The protein belongs to the universal ribosomal protein uL14 family. Part of the 50S ribosomal subunit. Forms a cluster with proteins L3 and L19. In the 70S ribosome, L14 and L19 interact and together make contacts with the 16S rRNA in bridges B5 and B8.

Binds to 23S rRNA. Forms part of two intersubunit bridges in the 70S ribosome. This chain is Large ribosomal subunit protein uL14, found in Natranaerobius thermophilus (strain ATCC BAA-1301 / DSM 18059 / JW/NM-WN-LF).